The sequence spans 228 residues: Ribulose-phosphate 3-epimerase (228 aa).

Residue serine 9 participates in substrate binding. Positions 34, 36, and 70 each coordinate a divalent metal cation. Catalysis depends on aspartate 36, which acts as the Proton acceptor. Residues histidine 70, 146 to 149 (GFPG), 179 to 181 (DGG), and 201 to 202 (GS) contribute to the substrate site. Residue aspartate 179 participates in a divalent metal cation binding. The Proton donor role is filled by aspartate 179.

It belongs to the ribulose-phosphate 3-epimerase family. A divalent metal cation is required as a cofactor.

The catalysed reaction is D-ribulose 5-phosphate = D-xylulose 5-phosphate. The protein operates within carbohydrate degradation. In terms of biological role, catalyzes the reversible epimerization of D-ribulose 5-phosphate to D-xylulose 5-phosphate. The polypeptide is Ribulose-phosphate 3-epimerase (Buchnera aphidicola subsp. Baizongia pistaciae (strain Bp)).